The following is a 500-amino-acid chain: Lysine--tRNA ligase (500 aa).

2 residues coordinate Mg(2+): E410 and E417.

The protein belongs to the class-II aminoacyl-tRNA synthetase family. In terms of assembly, homodimer. It depends on Mg(2+) as a cofactor.

It is found in the cytoplasm. The enzyme catalyses tRNA(Lys) + L-lysine + ATP = L-lysyl-tRNA(Lys) + AMP + diphosphate. This Shewanella denitrificans (strain OS217 / ATCC BAA-1090 / DSM 15013) protein is Lysine--tRNA ligase.